A 451-amino-acid polypeptide reads, in one-letter code: CBL-interacting protein kinase 10 (451 aa).

In terms of domain architecture, Protein kinase spans 13–267 (YEIGKLLGQG…VSEIMEDPWF (255 aa)). ATP contacts are provided by residues 19–27 (LGQGSFAKV) and Lys42. The active-site Proton acceptor is Asp135. Residues 153–182 (DFGLSALAECKRQDGLLHTTCGTPAYVAPE) are activation loop. One can recognise an NAF domain in the interval 304–336 (INEGKQEAENLTSLNAFDIISLSSGFDLSAMFE). The segment at 341–370 (KEESKFTSTNTATTITKKLEDVAKNLRLKF) is PPI.

The protein belongs to the protein kinase superfamily. CAMK Ser/Thr protein kinase family. SNF1 subfamily. Mn(2+) serves as cofactor.

The enzyme catalyses L-seryl-[protein] + ATP = O-phospho-L-seryl-[protein] + ADP + H(+). It catalyses the reaction L-threonyl-[protein] + ATP = O-phospho-L-threonyl-[protein] + ADP + H(+). In terms of biological role, CIPK serine-threonine protein kinases interact with CBL proteins. Binding of a CBL protein to the regulatory NAF domain of CIPK protein lead to the activation of the kinase in a calcium-dependent manner. This Oryza sativa subsp. japonica (Rice) protein is CBL-interacting protein kinase 10 (CIPK10).